The sequence spans 123 residues: Putative iron-sulfur cluster insertion protein ErpA (123 aa).

Iron-sulfur cluster-binding residues include Cys-51, Cys-115, and Cys-117.

It belongs to the HesB/IscA family. As to quaternary structure, homodimer. Iron-sulfur cluster serves as cofactor.

Functionally, required for insertion of 4Fe-4S clusters. This Bordetella avium (strain 197N) protein is Putative iron-sulfur cluster insertion protein ErpA.